We begin with the raw amino-acid sequence, 629 residues long: tRNA uridine 5-carboxymethylaminomethyl modification enzyme MnmG (629 aa).

Residues 13-18, Val125, and Ser180 contribute to the FAD site; that span reads GGGHAG. 273 to 287 is a binding site for NAD(+); it reads GPRYCPSIEDKVMRF. Gln370 contacts FAD.

Belongs to the MnmG family. In terms of assembly, homodimer. Heterotetramer of two MnmE and two MnmG subunits. FAD serves as cofactor.

It is found in the cytoplasm. NAD-binding protein involved in the addition of a carboxymethylaminomethyl (cmnm) group at the wobble position (U34) of certain tRNAs, forming tRNA-cmnm(5)s(2)U34. This is tRNA uridine 5-carboxymethylaminomethyl modification enzyme MnmG from Citrobacter koseri (strain ATCC BAA-895 / CDC 4225-83 / SGSC4696).